The primary structure comprises 257 residues: Ribonuclease HII (257 aa).

The RNase H type-2 domain occupies 72–257 (TYIAGIDEVG…FAPIKDMIQK (186 aa)). A divalent metal cation-binding residues include Asp-78, Glu-79, and Asp-170.

Belongs to the RNase HII family. Requires Mn(2+) as cofactor. Mg(2+) is required as a cofactor.

It is found in the cytoplasm. It catalyses the reaction Endonucleolytic cleavage to 5'-phosphomonoester.. Its function is as follows. Endonuclease that specifically degrades the RNA of RNA-DNA hybrids. The protein is Ribonuclease HII of Bacillus thuringiensis (strain Al Hakam).